The sequence spans 581 residues: Proline--tRNA ligase (581 aa).

The protein belongs to the class-II aminoacyl-tRNA synthetase family. ProS type 1 subfamily. As to quaternary structure, homodimer.

It localises to the cytoplasm. It carries out the reaction tRNA(Pro) + L-proline + ATP = L-prolyl-tRNA(Pro) + AMP + diphosphate. Functionally, catalyzes the attachment of proline to tRNA(Pro) in a two-step reaction: proline is first activated by ATP to form Pro-AMP and then transferred to the acceptor end of tRNA(Pro). As ProRS can inadvertently accommodate and process non-cognate amino acids such as alanine and cysteine, to avoid such errors it has two additional distinct editing activities against alanine. One activity is designated as 'pretransfer' editing and involves the tRNA(Pro)-independent hydrolysis of activated Ala-AMP. The other activity is designated 'posttransfer' editing and involves deacylation of mischarged Ala-tRNA(Pro). The misacylated Cys-tRNA(Pro) is not edited by ProRS. The chain is Proline--tRNA ligase from Blochmanniella pennsylvanica (strain BPEN).